A 466-amino-acid chain; its full sequence is FPYQGSSIILESGNVNDYEVVYPRKVTALPKGAVQQKYEDTMQYEFKVNGEPVVLHLEKNKGLFSKDYSETHYSPDGRRITTHPLVEDHCYYRGRIRNDADSTASISACNGLKGHFKLRGETYLIEPMKISNSEAHAVYKYENVEKEDEAHKMCGVTQNWESYEPIKKASQLIVTPEHQRYMEIVIVVDHSMYTKYNGDSDKIKTWIYEMSNTIRESYRYLYIDTSVAAIEIWSEKDLINVETSAKNTLESFGEWRARDLIHRISHDNAQLLTATDLDGPTIGLAYVASMCDPKRSVGVVQDHSSVNHLVAITLAHEIAHNLGVRHDEGSCSCGSGYTCIMSPVINPDAMKYFSDCSYIQCWDYIMKENPPCILNKPLRTDTVSTPVSGNELLEAGKDYDRDSSANPCYDAATCKLNQGAQCTAGPCCDQGRFKEEGTICRRARGDDLDDYCNGISGDCPRNPYHA.

Positions Phe1–Ser6 are cleaved as a signal peptide. Residues Ser7–Val174 constitute a propeptide that is removed on maturation. A Peptidase M12B domain is found at Arg180–Pro377. Ca(2+) is bound by residues Glu183 and Asp267. 3 disulfide bridges follow: Cys291–Cys372, Cys331–Cys356, and Cys333–Cys339. A Zn(2+)-binding site is contributed by His316. Glu317 is a catalytic residue. The Zn(2+) site is built by His320 and His326. Ca(2+) is bound by residues Cys372 and Asn375. A propeptide spanning residues Pro377–Arg401 is cleaved from the precursor. One can recognise a Disintegrin domain in the interval Thr385–Ala466. 3 disulfide bridges follow: Cys422–Cys428, Cys427–Cys452, and Cys440–Cys459. The Cell attachment site signature appears at Arg444–Asp446.

The protein belongs to the venom metalloproteinase (M12B) family. P-II subfamily. P-IIa sub-subfamily. As to quaternary structure, monomer. Requires Zn(2+) as cofactor. In terms of tissue distribution, expressed by the venom gland.

It is found in the secreted. Impairs hemostasis in the envenomed animal. Its function is as follows. Inhibits platelet aggregation induced by ADP, thrombin, platelet-activating factor and collagen. Acts by inhibiting fibrinogen interaction with platelet receptors GPIIb/GPIIIa (ITGA2B/ITGB3). This Deinagkistrodon acutus (Hundred-pace snake) protein is Zinc metalloproteinase/disintegrin.